The primary structure comprises 223 residues: Ubiquitin carboxyl-terminal hydrolase isozyme L1 (223 aa).

Position 1 is an N-acetylmethionine (M1). A UCH catalytic domain is found at 2-221 (QLKPMEINPE…VRFSAVALCK (220 aa)). Residues 5-10 (PMEINP) form an interaction with ubiquitin region. Catalysis depends on C90, which acts as the Nucleophile. Residue S125 is modified to Phosphoserine. H161 functions as the Proton donor in the catalytic mechanism. Residues 211–216 (EVRFSA) are interaction with ubiquitin. A lipid anchor (S-farnesyl cysteine) is attached at C220. A propeptide spans 221 to 223 (KAA) (removed in mature form).

It belongs to the peptidase C12 family. As to quaternary structure, monomer. Homodimer. Interacts with COPS5 and SNCA. Post-translationally, O-glycosylated.

The protein localises to the cytoplasm. It localises to the endoplasmic reticulum membrane. The catalysed reaction is Thiol-dependent hydrolysis of ester, thioester, amide, peptide and isopeptide bonds formed by the C-terminal Gly of ubiquitin (a 76-residue protein attached to proteins as an intracellular targeting signal).. In terms of biological role, ubiquitin-protein hydrolase involved both in the processing of ubiquitin precursors and of ubiquitinated proteins. This enzyme is a thiol protease that recognizes and hydrolyzes a peptide bond at the C-terminal glycine of ubiquitin. Also binds to free monoubiquitin and may prevent its degradation in lysosomes. The homodimer may have ATP-independent ubiquitin ligase activity. The chain is Ubiquitin carboxyl-terminal hydrolase isozyme L1 (UCHL1) from Sus scrofa (Pig).